A 454-amino-acid chain; its full sequence is Bifunctional protein GlmU (454 aa).

Residues Met-1 to Arg-226 are pyrophosphorylase. UDP-N-acetyl-alpha-D-glucosamine is bound by residues Leu-8–Gly-11, Lys-22, Gln-73, Gly-78–Thr-79, Tyr-100–Asp-102, Gly-137, Glu-151, Asn-166, and Asn-224. Position 102 (Asp-102) interacts with Mg(2+). Asn-224 serves as a coordination point for Mg(2+). Positions Val-227–Glu-247 are linker. The N-acetyltransferase stretch occupies residues Gly-248 to Lys-454. Residues Arg-330 and Lys-348 each coordinate UDP-N-acetyl-alpha-D-glucosamine. His-360 functions as the Proton acceptor in the catalytic mechanism. Positions 363 and 374 each coordinate UDP-N-acetyl-alpha-D-glucosamine. Residues Ala-377, Asn-383–Tyr-384, Ser-402, Ala-420, and Arg-437 each bind acetyl-CoA.

It in the N-terminal section; belongs to the N-acetylglucosamine-1-phosphate uridyltransferase family. The protein in the C-terminal section; belongs to the transferase hexapeptide repeat family. Homotrimer. The cofactor is Mg(2+).

Its subcellular location is the cytoplasm. The enzyme catalyses alpha-D-glucosamine 1-phosphate + acetyl-CoA = N-acetyl-alpha-D-glucosamine 1-phosphate + CoA + H(+). It catalyses the reaction N-acetyl-alpha-D-glucosamine 1-phosphate + UTP + H(+) = UDP-N-acetyl-alpha-D-glucosamine + diphosphate. It functions in the pathway nucleotide-sugar biosynthesis; UDP-N-acetyl-alpha-D-glucosamine biosynthesis; N-acetyl-alpha-D-glucosamine 1-phosphate from alpha-D-glucosamine 6-phosphate (route II): step 2/2. The protein operates within nucleotide-sugar biosynthesis; UDP-N-acetyl-alpha-D-glucosamine biosynthesis; UDP-N-acetyl-alpha-D-glucosamine from N-acetyl-alpha-D-glucosamine 1-phosphate: step 1/1. Its pathway is bacterial outer membrane biogenesis; LPS lipid A biosynthesis. Its function is as follows. Catalyzes the last two sequential reactions in the de novo biosynthetic pathway for UDP-N-acetylglucosamine (UDP-GlcNAc). The C-terminal domain catalyzes the transfer of acetyl group from acetyl coenzyme A to glucosamine-1-phosphate (GlcN-1-P) to produce N-acetylglucosamine-1-phosphate (GlcNAc-1-P), which is converted into UDP-GlcNAc by the transfer of uridine 5-monophosphate (from uridine 5-triphosphate), a reaction catalyzed by the N-terminal domain. This chain is Bifunctional protein GlmU, found in Shewanella frigidimarina (strain NCIMB 400).